The following is an 83-amino-acid chain: U3-theraphotoxin-Cg1a (83 aa).

A signal peptide spans 1 to 23 (MRTFTLIAILTCAVLVIFHAAAA). A propeptide spanning residues 24-44 (EELEAQDVIETEALATLDEER) is cleaved from the precursor. Cystine bridges form between Cys-48–Cys-61, Cys-52–Cys-75, and Cys-69–Cys-80.

It belongs to the neurotoxin 12 (Hwtx-2) family. 03 (juruin) subfamily. Post-translationally, contains 3 disulfide bonds. Two different connectivities are observed in similar proteins (C1-C3, C2-C5, C4-C6 or C1-C4, C2-C5, C3-C6). Expressed by the venom gland.

The protein resides in the secreted. Functionally, probable ion channel inhibitor. In Chilobrachys guangxiensis (Chinese earth tiger tarantula), this protein is U3-theraphotoxin-Cg1a.